The sequence spans 168 residues: Protein yop-1 (168 aa).

At 1–35 (MSSPQDRAQQYIGQLDKELSKYPTLNNLEKTTGVP) the chain is on the cytoplasmic side. A helical membrane pass occupies residues 36 to 55 (KAYAVIGLVALYFFLIIFNL). G56 is a topological domain (lumenal). A helical membrane pass occupies residues 57-76 (GQLLTNLAGFVLPGYYSLNA). The Cytoplasmic portion of the chain corresponds to 77–86 (LFTASKQDDT). Residues 87–103 (QWLTYWVVFSLFTVIES) traverse the membrane as a helical segment. The Lumenal segment spans residues 104–105 (LI). The helical transmembrane segment at 106 to 124 (SVVYWFPFYFTFKFVFLLW) threads the bilayer. The Cytoplasmic segment spans residues 125–168 (LSLPTFKGAETIFRSFLAPTLGRYFQNGSTASGLRAKADAVHTD).

Belongs to the DP1 family. As to quaternary structure, oligomer.

The protein localises to the endoplasmic reticulum membrane. Its subcellular location is the golgi apparatus membrane. Functionally, required to generate and maintain the structure of the tubular endoplasmic reticulum network and the vacuole. Induces high curvature in membranes and causes membrane tubule formation. Involved in membrane/vesicle trafficking. The protein is Protein yop-1 (yop-1) of Neurospora crassa (strain ATCC 24698 / 74-OR23-1A / CBS 708.71 / DSM 1257 / FGSC 987).